A 344-amino-acid chain; its full sequence is TATA box-binding protein-like 2 (344 aa).

The interval 78 to 143 (NKDRTVTGNK…SNQLSSETPN (66 aa)) is disordered. The segment covering 110-120 (GSGLNLNSNSS) has biased composition (low complexity). Positions 134-143 (SNQLSSETPN) are enriched in polar residues.

It belongs to the TBP family. As to quaternary structure, interacts with TAF3.

It is found in the cytoplasm. Its subcellular location is the nucleus. Functionally, transcription factor required in complex with TAF3 for the differentiation of myoblasts into myocytes. The complex replaces TFIID at specific promoters at an early stage in the differentiation process. This is TATA box-binding protein-like 2 from Rattus norvegicus (Rat).